The sequence spans 481 residues: Glutamyl-tRNA(Gln) amidotransferase subunit A (481 aa).

Residues K76 and S151 each act as charge relay system in the active site. The Acyl-ester intermediate role is filled by S175.

Belongs to the amidase family. GatA subfamily. In terms of assembly, heterotrimer of A, B and C subunits.

The enzyme catalyses L-glutamyl-tRNA(Gln) + L-glutamine + ATP + H2O = L-glutaminyl-tRNA(Gln) + L-glutamate + ADP + phosphate + H(+). Functionally, allows the formation of correctly charged Gln-tRNA(Gln) through the transamidation of misacylated Glu-tRNA(Gln) in organisms which lack glutaminyl-tRNA synthetase. The reaction takes place in the presence of glutamine and ATP through an activated gamma-phospho-Glu-tRNA(Gln). This is Glutamyl-tRNA(Gln) amidotransferase subunit A from Chlorobaculum parvum (strain DSM 263 / NCIMB 8327) (Chlorobium vibrioforme subsp. thiosulfatophilum).